The following is a 310-amino-acid chain: Methionyl-tRNA formyltransferase (310 aa).

(6S)-5,6,7,8-tetrahydrofolate is bound at residue 109-112 (SLLP).

It belongs to the Fmt family.

The catalysed reaction is L-methionyl-tRNA(fMet) + (6R)-10-formyltetrahydrofolate = N-formyl-L-methionyl-tRNA(fMet) + (6S)-5,6,7,8-tetrahydrofolate + H(+). In terms of biological role, attaches a formyl group to the free amino group of methionyl-tRNA(fMet). The formyl group appears to play a dual role in the initiator identity of N-formylmethionyl-tRNA by promoting its recognition by IF2 and preventing the misappropriation of this tRNA by the elongation apparatus. The sequence is that of Methionyl-tRNA formyltransferase from Pseudomonas entomophila (strain L48).